The following is a 1018-amino-acid chain: Pleckstrin homology domain-containing family M member 2 (1018 aa).

Met-1 is subject to N-acetylmethionine. The tract at residues Met-1–Leu-289 is interaction with KIF5B. Positions Arg-36 to Pro-158 constitute an RUN domain. 5 disordered regions span residues Ser-210–Leu-367, Thr-407–Leu-440, Glu-452–Leu-520, Glu-526–Thr-545, and Asp-555–Ser-583. Low complexity predominate over residues Ser-230–Pro-245. Polar residues predominate over residues Glu-258–Thr-270. Positions Val-294 to Thr-306 are enriched in basic residues. 2 stretches are compositionally biased toward polar residues: residues His-316–Gly-325 and Val-347–Leu-367. Ser-423 bears the Phosphoserine mark. The PH domain maps to Thr-770 to Ser-872.

Interacts with KLC2 (via TPR repeats). Interacts with KIF5B. Interacts with BORCS5. Interacts (via RUN domain) with ARL8B (GTP-bound form); PLEKHM1 and PLEKHM2 compete for interaction with ARL8B. Interacts with ARL8A.

It localises to the cytoplasm. The protein resides in the lysosome membrane. Plays a role in lysosomes movement and localization at the cell periphery acting as an effector of ARL8B. Required for ARL8B to exert its effects on lysosome location, recruits kinesin-1 to lysosomes and hence direct their movement toward microtubule plus ends. Binding to ARL8B provides a link from lysosomal membranes to plus-end-directed motility. Critical factor involved in NK cell-mediated cytotoxicity. Drives the polarization of cytolytic granules and microtubule-organizing centers (MTOCs) toward the immune synapse between effector NK lymphocytes and target cells. Required for maintenance of the Golgi apparatus organization. May play a role in membrane tubulation. The polypeptide is Pleckstrin homology domain-containing family M member 2 (Mus musculus (Mouse)).